Reading from the N-terminus, the 211-residue chain is Large ribosomal subunit protein uL3 (211 aa).

A disordered region spans residues 122–147 (AIKRHGQSRGPMAHGSRYHRRPGSMG).

Belongs to the universal ribosomal protein uL3 family. Part of the 50S ribosomal subunit. Forms a cluster with proteins L14 and L19.

Its function is as follows. One of the primary rRNA binding proteins, it binds directly near the 3'-end of the 23S rRNA, where it nucleates assembly of the 50S subunit. This is Large ribosomal subunit protein uL3 from Geobacillus sp. (strain WCH70).